The primary structure comprises 137 residues: Phosphoribosyl-AMP cyclohydrolase (137 aa).

Position 84 (Asp-84) interacts with Mg(2+). Cys-85 contacts Zn(2+). Asp-86 and Asp-88 together coordinate Mg(2+). Residues Cys-101 and Cys-108 each contribute to the Zn(2+) site.

Belongs to the PRA-CH family. Homodimer. The cofactor is Mg(2+). Zn(2+) is required as a cofactor.

It localises to the cytoplasm. The catalysed reaction is 1-(5-phospho-beta-D-ribosyl)-5'-AMP + H2O = 1-(5-phospho-beta-D-ribosyl)-5-[(5-phospho-beta-D-ribosylamino)methylideneamino]imidazole-4-carboxamide. Its pathway is amino-acid biosynthesis; L-histidine biosynthesis; L-histidine from 5-phospho-alpha-D-ribose 1-diphosphate: step 3/9. Functionally, catalyzes the hydrolysis of the adenine ring of phosphoribosyl-AMP. The sequence is that of Phosphoribosyl-AMP cyclohydrolase from Chlorobium limicola (strain DSM 245 / NBRC 103803 / 6330).